The following is a 449-amino-acid chain: Glutamate--tRNA ligase (449 aa).

A 'HIGH' region motif is present at residues 10 to 20 (PSPTGHLHIGN). The 'KMSKS' region signature appears at 214–218 (KLSKR). Position 217 (Lys217) interacts with ATP.

This sequence belongs to the class-I aminoacyl-tRNA synthetase family. Glutamate--tRNA ligase type 1 subfamily. In terms of assembly, monomer.

The protein resides in the cytoplasm. The catalysed reaction is tRNA(Glu) + L-glutamate + ATP = L-glutamyl-tRNA(Glu) + AMP + diphosphate. Functionally, catalyzes the attachment of glutamate to tRNA(Glu) in a two-step reaction: glutamate is first activated by ATP to form Glu-AMP and then transferred to the acceptor end of tRNA(Glu). The polypeptide is Glutamate--tRNA ligase (Acholeplasma laidlawii (strain PG-8A)).